A 311-amino-acid chain; its full sequence is MKPKIFIDGEHGTTGLQIRTRLAERDDLEVISIPEAERRNKDLRADYLRAADIAILCLPDDASKEAVSLLEGHNSTRIIDTSTAHRVHPDWAYGFAELAKGQRERIAEARLVANPGCYPTGAIALVRPLRDAGLLPADYPVSVNAVSGYTGGGKQMIAQMEDKSHPEHLAANNFLYGLPLKHKHVPELQLHGRLDRRPIFSPSVGRFPQGMIVQVPLFLTGLEGTPSLAKVHSVLTDHYAGQDIVEVAPLEESAKLARVDAEELAGKDGMKLFVFGTEGDGEVNLVALLDNLGKGASGAAVQNMNLMLGKV.

Residue cysteine 117 is part of the active site.

Belongs to the NAGSA dehydrogenase family. Type 2 subfamily.

The protein localises to the cytoplasm. It carries out the reaction N-acetyl-L-glutamate 5-semialdehyde + phosphate + NADP(+) = N-acetyl-L-glutamyl 5-phosphate + NADPH + H(+). It participates in amino-acid biosynthesis; L-arginine biosynthesis; N(2)-acetyl-L-ornithine from L-glutamate: step 3/4. Its function is as follows. Catalyzes the NADPH-dependent reduction of N-acetyl-5-glutamyl phosphate to yield N-acetyl-L-glutamate 5-semialdehyde. This Brucella anthropi (strain ATCC 49188 / DSM 6882 / CCUG 24695 / JCM 21032 / LMG 3331 / NBRC 15819 / NCTC 12168 / Alc 37) (Ochrobactrum anthropi) protein is N-acetyl-gamma-glutamyl-phosphate reductase.